We begin with the raw amino-acid sequence, 367 residues long: Uroporphyrinogen decarboxylase (367 aa).

The residue at position 1 (Met-1) is an N-acetylmethionine. Coproporphyrinogen I contacts are provided by Arg-37, Ala-39, Arg-41, Arg-50, Asp-86, Tyr-164, Ser-219, and His-339. Coproporphyrinogen III is bound by residues Arg-37, Ala-39, and Arg-41. Coproporphyrinogen III-binding residues include Asp-86, Tyr-164, Ser-219, and His-339.

This sequence belongs to the uroporphyrinogen decarboxylase family. In terms of assembly, homodimer.

It is found in the cytoplasm. The protein resides in the cytosol. It carries out the reaction uroporphyrinogen III + 4 H(+) = coproporphyrinogen III + 4 CO2. It catalyses the reaction uroporphyrinogen I + 4 H(+) = coproporphyrinogen I + 4 CO2. The protein operates within porphyrin-containing compound metabolism; protoporphyrin-IX biosynthesis; coproporphyrinogen-III from 5-aminolevulinate: step 4/4. In terms of biological role, catalyzes the sequential decarboxylation of the four acetate side chains of uroporphyrinogen to form coproporphyrinogen and participates in the fifth step in the heme biosynthetic pathway. Isomer I or isomer III of uroporphyrinogen may serve as substrate, but only coproporphyrinogen III can ultimately be converted to heme. In vitro also decarboxylates pentacarboxylate porphyrinogen I. This is Uroporphyrinogen decarboxylase from Homo sapiens (Human).